The primary structure comprises 510 residues: NAD(P)H-quinone oxidoreductase subunit 2, chloroplastic (510 aa).

Transmembrane regions (helical) follow at residues 24 to 44 (LLLF…GLIL), 59 to 79 (WFYF…LFRW), 99 to 119 (IFQF…VEYI), 124 to 144 (MAIT…MFLC), 149 to 169 (LITI…LSGY), 183 to 203 (YLLM…WLYG), 229 to 249 (ISIA…PAPF), 295 to 315 (WHLL…LIAI), 323 to 343 (MLAY…IVGD), 354 to 374 (YMLF…LFGL), 395 to 415 (ALSS…AGFF), and 418 to 438 (LYLF…IGLL).

The protein belongs to the complex I subunit 2 family. As to quaternary structure, NDH is composed of at least 16 different subunits, 5 of which are encoded in the nucleus.

Its subcellular location is the plastid. It localises to the chloroplast thylakoid membrane. It catalyses the reaction a plastoquinone + NADH + (n+1) H(+)(in) = a plastoquinol + NAD(+) + n H(+)(out). The enzyme catalyses a plastoquinone + NADPH + (n+1) H(+)(in) = a plastoquinol + NADP(+) + n H(+)(out). NDH shuttles electrons from NAD(P)H:plastoquinone, via FMN and iron-sulfur (Fe-S) centers, to quinones in the photosynthetic chain and possibly in a chloroplast respiratory chain. The immediate electron acceptor for the enzyme in this species is believed to be plastoquinone. Couples the redox reaction to proton translocation, and thus conserves the redox energy in a proton gradient. In Ananas comosus (Pineapple), this protein is NAD(P)H-quinone oxidoreductase subunit 2, chloroplastic.